The chain runs to 97 residues: DNA/RNA-binding protein Alba (97 aa).

Lys-15 is subject to N6-acetyllysine.

The protein belongs to the histone-like Alba family. In terms of processing, acetylated. Acetylation at Lys-15 decreases DNA-binding affinity.

Its subcellular location is the cytoplasm. It is found in the chromosome. In terms of biological role, binds double-stranded DNA tightly but without sequence specificity. Involved in DNA compaction. The protein is DNA/RNA-binding protein Alba of Sulfolobus acidocaldarius (strain ATCC 33909 / DSM 639 / JCM 8929 / NBRC 15157 / NCIMB 11770).